A 418-amino-acid polypeptide reads, in one-letter code: Serine--tRNA ligase (418 aa).

An L-serine-binding site is contributed by 231-233 (TAE). 262–264 (RSE) provides a ligand contact to ATP. Glutamate 285 contacts L-serine. An ATP-binding site is contributed by 349-352 (EISS). Residue serine 385 coordinates L-serine.

Belongs to the class-II aminoacyl-tRNA synthetase family. Type-1 seryl-tRNA synthetase subfamily. In terms of assembly, homodimer. The tRNA molecule binds across the dimer.

Its subcellular location is the cytoplasm. It catalyses the reaction tRNA(Ser) + L-serine + ATP = L-seryl-tRNA(Ser) + AMP + diphosphate + H(+). The enzyme catalyses tRNA(Sec) + L-serine + ATP = L-seryl-tRNA(Sec) + AMP + diphosphate + H(+). It participates in aminoacyl-tRNA biosynthesis; selenocysteinyl-tRNA(Sec) biosynthesis; L-seryl-tRNA(Sec) from L-serine and tRNA(Sec): step 1/1. Its function is as follows. Catalyzes the attachment of serine to tRNA(Ser). Is also able to aminoacylate tRNA(Sec) with serine, to form the misacylated tRNA L-seryl-tRNA(Sec), which will be further converted into selenocysteinyl-tRNA(Sec). In Ureaplasma parvum serovar 3 (strain ATCC 27815 / 27 / NCTC 11736), this protein is Serine--tRNA ligase.